Reading from the N-terminus, the 335-residue chain is Acetyl-coenzyme A carboxylase carboxyl transferase subunit alpha (335 aa).

Residues 40–294 form the CoA carboxyltransferase C-terminal domain; it reads QLETLAARRR…KEAIEKHLNA (255 aa).

This sequence belongs to the AccA family. In terms of assembly, acetyl-CoA carboxylase is a heterohexamer composed of biotin carboxyl carrier protein (AccB), biotin carboxylase (AccC) and two subunits each of ACCase subunit alpha (AccA) and ACCase subunit beta (AccD).

Its subcellular location is the cytoplasm. It carries out the reaction N(6)-carboxybiotinyl-L-lysyl-[protein] + acetyl-CoA = N(6)-biotinyl-L-lysyl-[protein] + malonyl-CoA. It functions in the pathway lipid metabolism; malonyl-CoA biosynthesis; malonyl-CoA from acetyl-CoA: step 1/1. Functionally, component of the acetyl coenzyme A carboxylase (ACC) complex. First, biotin carboxylase catalyzes the carboxylation of biotin on its carrier protein (BCCP) and then the CO(2) group is transferred by the carboxyltransferase to acetyl-CoA to form malonyl-CoA. This is Acetyl-coenzyme A carboxylase carboxyl transferase subunit alpha from Prochlorococcus marinus (strain AS9601).